Reading from the N-terminus, the 170-residue chain is Peptide deformylase (170 aa).

2 residues coordinate Fe cation: C94 and H136. E137 is an active-site residue. Residue H140 participates in Fe cation binding.

It belongs to the polypeptide deformylase family. The cofactor is Fe(2+).

The catalysed reaction is N-terminal N-formyl-L-methionyl-[peptide] + H2O = N-terminal L-methionyl-[peptide] + formate. Functionally, removes the formyl group from the N-terminal Met of newly synthesized proteins. Requires at least a dipeptide for an efficient rate of reaction. N-terminal L-methionine is a prerequisite for activity but the enzyme has broad specificity at other positions. This is Peptide deformylase from Wolinella succinogenes (strain ATCC 29543 / DSM 1740 / CCUG 13145 / JCM 31913 / LMG 7466 / NCTC 11488 / FDC 602W) (Vibrio succinogenes).